A 116-amino-acid polypeptide reads, in one-letter code: Large ribosomal subunit protein bL17 (116 aa).

Belongs to the bacterial ribosomal protein bL17 family. Part of the 50S ribosomal subunit. Contacts protein L32.

The protein is Large ribosomal subunit protein bL17 of Microcystis aeruginosa (strain NIES-843 / IAM M-2473).